A 359-amino-acid polypeptide reads, in one-letter code: Phospho-N-acetylmuramoyl-pentapeptide-transferase (359 aa).

10 consecutive transmembrane segments (helical) span residues 21–41 (YITF…FLLG), 73–93 (TMGG…WADL), 98–118 (IWVT…DDYL), 143–163 (GICL…VPFF), 166–186 (VAPD…VGTS), 202–222 (PLVI…NAII), 237–257 (VTVF…FNAY), 261–281 (IFMG…VAII), 286–306 (ILLT…IFQV), and 336–356 (KIIV…VSTL).

The protein belongs to the glycosyltransferase 4 family. MraY subfamily. The cofactor is Mg(2+).

The protein localises to the cell inner membrane. The enzyme catalyses UDP-N-acetyl-alpha-D-muramoyl-L-alanyl-gamma-D-glutamyl-meso-2,6-diaminopimeloyl-D-alanyl-D-alanine + di-trans,octa-cis-undecaprenyl phosphate = di-trans,octa-cis-undecaprenyl diphospho-N-acetyl-alpha-D-muramoyl-L-alanyl-D-glutamyl-meso-2,6-diaminopimeloyl-D-alanyl-D-alanine + UMP. Its pathway is cell wall biogenesis; peptidoglycan biosynthesis. Functionally, catalyzes the initial step of the lipid cycle reactions in the biosynthesis of the cell wall peptidoglycan: transfers peptidoglycan precursor phospho-MurNAc-pentapeptide from UDP-MurNAc-pentapeptide onto the lipid carrier undecaprenyl phosphate, yielding undecaprenyl-pyrophosphoryl-MurNAc-pentapeptide, known as lipid I. The protein is Phospho-N-acetylmuramoyl-pentapeptide-transferase of Desulfosudis oleivorans (strain DSM 6200 / JCM 39069 / Hxd3) (Desulfococcus oleovorans).